The sequence spans 224 residues: Thylakoid lumenal 15 kDa protein 1, chloroplastic (224 aa).

The N-terminal 34 residues, 1-34 (MVILSNVSLFSCCNISQKPSLFSPSSRSSHCPIR), are a transit peptide targeting the chloroplast. The N-terminal 47 residues, 35–81 (CSQSQEGKEVVTSPLRSVVWSLGEEVSKRSLFALVSASLFFVDPALA), are a transit peptide targeting the thylakoid. Pentapeptide repeat domains lie at 116 to 155 (SILR…DFSL) and 156 to 196 (ANVT…PLRD).

The protein localises to the plastid. It localises to the chloroplast thylakoid lumen. This Arabidopsis thaliana (Mouse-ear cress) protein is Thylakoid lumenal 15 kDa protein 1, chloroplastic.